A 338-amino-acid polypeptide reads, in one-letter code: Ferredoxin--NADP reductase (338 aa).

7 residues coordinate FAD: D38, Q46, Y51, V91, F125, D291, and T331.

It belongs to the ferredoxin--NADP reductase type 2 family. Homodimer. FAD is required as a cofactor.

The enzyme catalyses 2 reduced [2Fe-2S]-[ferredoxin] + NADP(+) + H(+) = 2 oxidized [2Fe-2S]-[ferredoxin] + NADPH. The polypeptide is Ferredoxin--NADP reductase (Orientia tsutsugamushi (strain Boryong) (Rickettsia tsutsugamushi)).